We begin with the raw amino-acid sequence, 548 residues long: Chaperonin GroEL (548 aa).

Residues 29–32 (TMGP), lysine 50, 86–90 (DGTTT), glycine 414, 478–480 (NAA), and aspartate 494 each bind ATP.

Belongs to the chaperonin (HSP60) family. Forms a cylinder of 14 subunits composed of two heptameric rings stacked back-to-back. Interacts with the co-chaperonin GroES.

The protein localises to the cytoplasm. The enzyme catalyses ATP + H2O + a folded polypeptide = ADP + phosphate + an unfolded polypeptide.. Together with its co-chaperonin GroES, plays an essential role in assisting protein folding. The GroEL-GroES system forms a nano-cage that allows encapsulation of the non-native substrate proteins and provides a physical environment optimized to promote and accelerate protein folding. The protein is Chaperonin GroEL of Legionella pneumophila (strain Paris).